We begin with the raw amino-acid sequence, 2148 residues long: Polyketide synthase 1 (2148 aa).

An N-terminal acylcarrier protein transacylase domain (SAT) region spans residues 19–261 (FIFGDQSSCN…TPLAVHAPYH (243 aa)). One can recognise a Ketosynthase family 3 (KS3) domain in the interval 394–829 (ESKIAIIGMS…GGNTALLVED (436 aa)). Residues Cys566, His701, and His745 each act as for beta-ketoacyl synthase activity in the active site. Residues 929–1233 (AFVFSGQGSQ…PSLMRNKDGW (305 aa)) form a malonyl-CoA:ACP transacylase (MAT) domain region. The active-site For acyl/malonyl transferase activity is Ser1018. The product template (PT) domain stretch occupies residues 1310-1624 (TASVHRIVHE…RKVLNTAMPP (315 aa)). Residues 1314 to 1447 (HRIVHESVDK…SSLHFEQPKV (134 aa)) are N-terminal hotdog fold. The PKS/mFAS DH domain maps to 1314-1619 (HRIVHESVDK…FQGIPRKVLN (306 aa)). His1346 acts as the Proton acceptor; for dehydratase activity in catalysis. The interval 1474 to 1619 (LNSRMSSGVI…FQGIPRKVLN (146 aa)) is C-terminal hotdog fold. Asp1533 acts as the Proton donor; for dehydratase activity in catalysis. Residues 1619 to 1657 (NTAMPPPKSQNEAPVRSAPAKPAAKPPKSASSEHSGHFA) are disordered. A compositionally biased stretch (low complexity) spans 1635–1650 (SAPAKPAAKPPKSASS). Residues 1678–1752 (RNPMLAVFKI…DLATHLGLDT (75 aa)) enclose the Carrier 1 domain. Residue Ser1712 is modified to O-(pantetheine 4'-phosphoryl)serine. Residues 1755–1790 (SDQSSGQSSSSGGLSPRSDSIGEITSSATTPPSLSP) show a composition bias toward low complexity. The segment at 1755–1796 (SDQSSGQSSSSGGLSPRSDSIGEITSSATTPPSLSPRGSVSG) is disordered. One can recognise a Carrier 2 domain in the interval 1793–1870 (SVSGSQCKDV…SFKHMFQQGH (78 aa)). Ser1830 carries the post-translational modification O-(pantetheine 4'-phosphoryl)serine. A thioesterase (TE) domain region spans residues 1882-2146 (LKQYRATSTL…ERVAAFIRST (265 aa)). Ser1973 functions as the For thioesterase activity in the catalytic mechanism.

Functionally, polyketide synthase; part of the Pks1 gene cluster that mediates the biosynthesis of an anthraquinone derivative pigment that contributes to conidial pigmentation that provides protection from UV radiation, heat and cold stress. The polyketide synthase Pks1 produces 1-acetyl-2,4,6,8-tetrahydroxy-9,10-anthraquinone though condensation of acetyl-CoA with malonyl-CoA. The dehydratase EthD and the laccase Mlac1 further convert the anthraquinone derivative into the final conidial pigment. This chain is Polyketide synthase 1, found in Metarhizium guizhouense (strain ARSEF 977).